A 1785-amino-acid polypeptide reads, in one-letter code: BCL-6 corepressor-like protein 1 (1785 aa).

Disordered regions lie at residues 65 to 101 (VGSGSNARGADPDGSATEKLGHKSEDKPDDPQPKMDY), 113 to 137 (VPLSSPGDGLKLPASDSAEASNSRA), and 343 to 368 (ASTPPAAPAPPSVPMPTPTPSSGPPS). The segment covering 83–97 (KLGHKSEDKPDDPQP) has biased composition (basic and acidic residues). S496 carries the post-translational modification Phosphoserine. Polar residues-rich tracts occupy residues 527 to 539 (PCTSPSGSTTTQP) and 586 to 600 (GTEQQTEGTSVTFSP). 2 disordered regions span residues 527 to 550 (PCTSPSGSTTTQPAPDGVPGPLAD) and 562 to 646 (PTPQ…PMPV). Residues S599 and S613 each carry the phosphoserine modification. A Glycyl lysine isopeptide (Lys-Gly) (interchain with G-Cter in SUMO2) cross-link involves residue K747. Disordered stretches follow at residues 753-781 (IIDQGEPKGTGATCGKKGSQAGAEGQPST), 876-901 (SSSEAVHGLPEGQPRPGGSFVPEQDP), and 937-977 (VQPS…LKLA). 2 positions are modified to phosphoserine: S1029 and S1033. K1092 participates in a covalent cross-link: Glycyl lysine isopeptide (Lys-Gly) (interchain with G-Cter in SUMO2). Disordered regions lie at residues 1107–1293 (PDDV…QGRR) and 1312–1487 (WDTN…PEAR). At S1162 the chain carries Phosphoserine. Residues 1176 to 1185 (VRGKHKHRKP) are compositionally biased toward basic residues. A compositionally biased stretch (basic and acidic residues) spans 1195 to 1213 (KRADSHEEGSLEKKAKSSF). A compositionally biased stretch (polar residues) spans 1222 to 1234 (STRTRSQSGSICS). Basic and acidic residues predominate over residues 1271-1284 (TQRDTQYRSHHAQD). The span at 1314 to 1324 (TNEEEEEEEEE) shows a compositional bias: acidic residues. A Nuclear localization signal motif is present at residues 1328 to 1336 (KRKKRRRQK). The span at 1328–1339 (KRKKRRRQKSRK) shows a compositional bias: basic residues. Residues 1352 to 1363 (EQRRKGRADLKA) are compositionally biased toward basic and acidic residues. Polar residues predominate over residues 1440-1449 (WSQQKTRSPK). Low complexity predominate over residues 1461 to 1480 (TPSKSRSASSEEASESPTAR). S1476 carries the phosphoserine modification. ANK repeat units follow at residues 1529–1558 (AGYTALHEACSRGWTDILNILLEHGANVNC), 1562–1591 (DGTRPVHDAVVNDNLETIWLLLSYGADPTL), and 1595–1623 (SGQTAMKLASSDTMKRFLSDHLSDLQGRA). The PCGF Ub-like fold domain (PUFD); required for the interaction with the KDM2B-SKP1 heterodimeric complex stretch occupies residues 1668 to 1785 (DDFMFELSDK…SEVEFQSCNS (118 aa)).

The protein belongs to the BCOR family. In terms of assembly, interacts with PCGF1, forming heterodimers. The PCGF1-BCORL1 heterodimeric complex interacts with the KDM2B-SKP1 heterodimeric complex to form a homotetrameric polycomb repression complex 1 (PRC1.1). Interacts with SKP1. Interacts with CTBP1, HDAC4, HDAC5 and HDAC7. Detected in testis and prostate. Detected at lower levels in peripheral blood leukocytes and spleen. Mainly expressed in the spermatogonia and primary spermatocytes.

The protein resides in the nucleus. Transcriptional corepressor. May specifically inhibit gene expression when recruited to promoter regions by sequence-specific DNA-binding proteins such as BCL6. This repression may be mediated at least in part by histone deacetylase activities which can associate with this corepressor. The protein is BCL-6 corepressor-like protein 1 of Homo sapiens (Human).